Here is a 138-residue protein sequence, read N- to C-terminus: Small ribosomal subunit protein uS11c (138 aa).

Residues 1 to 23 (MAKPILRIGSRKNTRSGSRKNVR) form a disordered region. A compositionally biased stretch (basic residues) spans 9 to 23 (GSRKNTRSGSRKNVR).

The protein belongs to the universal ribosomal protein uS11 family. As to quaternary structure, part of the 30S ribosomal subunit.

The protein localises to the plastid. The protein resides in the chloroplast. The protein is Small ribosomal subunit protein uS11c of Aethionema grandiflorum (Persian stone-cress).